The chain runs to 355 residues: N6-Methyl-AMP deaminase (355 aa).

Residues H24 and H26 each coordinate Zn(2+). Residues H26, N28, H74, 106-109 (STPR), D148, and G181 each bind N(6)-methyl-AMP. H208 provides a ligand contact to Zn(2+). Positions 211, 293, and 294 each coordinate N(6)-methyl-AMP. Residue E211 is the Proton donor of the active site. D293 is a Zn(2+) binding site.

The protein belongs to the metallo-dependent hydrolases superfamily. Adenosine and AMP deaminases family. In terms of assembly, monomer. Requires Zn(2+) as cofactor.

The enzyme catalyses N(6)-methyl-AMP + H2O + H(+) = IMP + methylamine. Its function is as follows. Catalyzes the hydrolysis of the free cytosolic methylated adenosine nucleotide N(6)-methyl-AMP (N6-mAMP) to produce inositol monophosphate (IMP) and methylamine. Is required for the catabolism of cytosolic N6-mAMP, which is derived from the degradation of mRNA containing N6-methylated adenine (m6A). Catalyzes the removal of different alkyl groups not only from N6-substituted purine or 2-aminopurine nucleoside monophosphates but also from O6-substituted compounds in vitro. In Homo sapiens (Human), this protein is N6-Methyl-AMP deaminase.